Consider the following 202-residue polypeptide: Small ribosomal subunit protein uS4 (202 aa).

The region spanning 94–157 (SRLDSLVYRA…LEMPLIKNTL (64 aa)) is the S4 RNA-binding domain.

The protein belongs to the universal ribosomal protein uS4 family. Part of the 30S ribosomal subunit. Contacts protein S5. The interaction surface between S4 and S5 is involved in control of translational fidelity.

Functionally, one of the primary rRNA binding proteins, it binds directly to 16S rRNA where it nucleates assembly of the body of the 30S subunit. With S5 and S12 plays an important role in translational accuracy. This chain is Small ribosomal subunit protein uS4, found in Ureaplasma urealyticum serovar 10 (strain ATCC 33699 / Western).